The primary structure comprises 920 residues: MDVDKQMLQWRKRAWLNSNQLYGELTDIIIKDTGFTSSFANLIDNSEVDSFSKNIVNIFTTANKTLPLIKDLIYNEFNTKVLAEGEGSILRGNSIVNKIEGAYVRLIGANYLRFVLSDLVTKVVLDSDLKLEIDPRKLNDYYEDKIEFEKKVAEVELRDNQKSLHNIAQQFLDRITDPSVVVEMPREIRAIADYTAESALRYAPESLAPLVGGFIMLRFFSPAIVTPEYSKLLSSEVAPSKRAKRNLVLLAKVLQNASNGVLFGGKEEFMTCMNDFIIGNKEKMSAYFNLICKDPLNQNNKWSDLEGVKSATTTTTILTPTNTTTSSNGSGGTTWAKPIVGGSKWLATTPSGNTPSPAISNASSAHNGKSNNTTNNNNNNNNNNNNNNNNNNNNNNNSNKTTTTATTISSNSWDVYIKNVQIQDLFDLHRIFDSYKEKIVNKIINTNNNNANNANNNNTNNINNKTAIRVIEILKELGPSPKTKTERKKKETDAAEEPTTSLQNGASMGSAFDECTHMLERSRFLFQGPNDKNDRSVFYLIVNRVKPEVFDNVNPLIAHIFKVMDICVNSPYTLVVDMSWAHISNDLKKAIFTHLPKLAEIFSRKYKKNIDKIFIVHPSAYTRAVIYFMSAFTSRKLKRKIHDIYNWKDLSQYIDIENIALPETSKDFITKSYRVVKVNSKGKRQERLIKFTSNSLLNIDPKTHRIQNEKRINEIDEITSRLGSIEINMKLSGESKKSGSILGTKIGFLSINNNNNNNNDDSNGNHDINESNSRKYICNHELERDHILQDIFETGFKMGLQSKSTKSLPTEYKVIKVNNVGKHQERIFKLTIDSLLNLDQQRIKSENSFAGIEEVILDPHDDDIVWLKFKSEPSRRKIICTVKGEGKLLLEVLTDAINKYQTTIDIQEGALKLDAEEGFL.

The region spanning 63–291 (NKTLPLIKDL…EKMSAYFNLI (229 aa)) is the Ras-GAP domain. Disordered stretches follow at residues 344–405 (KWLA…TTTA) and 477–508 (LGPSPKTKTERKKKETDAAEEPTTSLQNGASM). The segment covering 346-369 (LATTPSGNTPSPAISNASSAHNGK) has biased composition (polar residues). Residues 370-405 (SNNTTNNNNNNNNNNNNNNNNNNNNNNNSNKTTTTA) show a composition bias toward low complexity. Positions 498 to 507 (PTTSLQNGAS) are enriched in polar residues. Residues 512–673 (FDECTHMLER…TSKDFITKSY (162 aa)) form the CRAL-TRIO domain.

Its function is as follows. Regulator of the GTPase activity of Ras, mainly RasG and RasB. This Dictyostelium discoideum (Social amoeba) protein is Neurofibromin-A (nfaA).